We begin with the raw amino-acid sequence, 125 residues long: UPF0225 protein Cgl1438/cg1626 (125 aa).

It belongs to the UPF0225 family.

This chain is UPF0225 protein Cgl1438/cg1626, found in Corynebacterium glutamicum (strain ATCC 13032 / DSM 20300 / JCM 1318 / BCRC 11384 / CCUG 27702 / LMG 3730 / NBRC 12168 / NCIMB 10025 / NRRL B-2784 / 534).